The following is a 439-amino-acid chain: Orphan methyltransferase M.SPRI (439 aa).

One can recognise an SAM-dependent MTase C5-type domain in the interval 4-436 (LRVMSLFSGI…KELIHTYINK (433 aa)). The active site involves C78.

Belongs to the class I-like SAM-binding methyltransferase superfamily. C5-methyltransferase family. Monomer.

The catalysed reaction is a 2'-deoxycytidine in DNA + S-adenosyl-L-methionine = a 5-methyl-2'-deoxycytidine in DNA + S-adenosyl-L-homocysteine + H(+). A methyltransferase that methylates the C-1 in the sequence 5'-GGCC-3' and both cytosines in the sequence 5'-CCGG-3'. A methyltransferase that methylates C-3 within the sequence 5'-GGCC-3', C-1 in 5'-CCGG-3' and C-2 in 5'-CCWGG-3'. Modification confers resistance against restriction enzymes that recognize these sequences. The polypeptide is Orphan methyltransferase M.SPRI (Bacillus phage SPR (Bacteriophage SPR)).